Here is a 311-residue protein sequence, read N- to C-terminus: 4-hydroxy-tetrahydrodipicolinate synthase (311 aa).

Thr-51 lines the pyruvate pocket. The active-site Proton donor/acceptor is Tyr-140. Catalysis depends on Lys-168, which acts as the Schiff-base intermediate with substrate. Ile-209 is a pyruvate binding site.

The protein belongs to the DapA family. Homotetramer; dimer of dimers.

It is found in the cytoplasm. The enzyme catalyses L-aspartate 4-semialdehyde + pyruvate = (2S,4S)-4-hydroxy-2,3,4,5-tetrahydrodipicolinate + H2O + H(+). It participates in amino-acid biosynthesis; L-lysine biosynthesis via DAP pathway; (S)-tetrahydrodipicolinate from L-aspartate: step 3/4. Functionally, catalyzes the condensation of (S)-aspartate-beta-semialdehyde [(S)-ASA] and pyruvate to 4-hydroxy-tetrahydrodipicolinate (HTPA). In Streptococcus suis (strain 98HAH33), this protein is 4-hydroxy-tetrahydrodipicolinate synthase.